The sequence spans 366 residues: Terpene cyclase atmA (366 aa).

The next 8 membrane-spanning stretches (helical) occupy residues 9–29 (FLLL…NNGF), 84–104 (LTGL…VVHI), 113–133 (GMVI…GIVI), 162–182 (GLVV…SLPA), 195–215 (IAAW…HHLF), 233–253 (VYHF…SAFV), 291–311 (AGLF…TMVW), and 333–353 (ILRL…VRLI).

It belongs to the membrane-bound ascI terpene cyclase family.

Its subcellular location is the membrane. In terms of biological role, aflatrem synthesis protein A; part of the ATM2 gene cluster that mediates the biosynthesis of aflatrem, a tremorgenic mycotoxin with acute neurotoxic effects. Synthesis of geranylgeranyl diphosphate (GGPP) by AtmG (a GGPP synthase) precedes condensation of GGPP with indole 3-glycerol phosphate, followed by epoxidation and cyclization by AtmM (a FAD-dependent monooxygenase) and AtmC (a prenyltransferase) to produce paspaline. AtmB is also essential for paspaline production, but its exact role has not been identified yet. AtmP, a cytochrome P450 monooxygenase, subsequently converts paspaline to 13-desoxypaxilline via PC-M6 by removal of the C-30 methyl group and oxidation at C-10. AtmQ, a cytochrome P450 monooxygenase, then catalyzes the oxidation of 13-desoxypaxilline, first at C-7 to produce paspalicine and then at C-13 to form paspalinine. Finally, AtmD prenylates paspalinine to form aflatrem. The role of atmA in the aflatrem biosynthesis is still unknown. This is Terpene cyclase atmA from Aspergillus flavus.